Consider the following 132-residue polypeptide: Protein NrdI (132 aa).

It belongs to the NrdI family.

Its function is as follows. Probably involved in ribonucleotide reductase function. This Staphylococcus aureus (strain Mu3 / ATCC 700698) protein is Protein NrdI.